The following is a 200-amino-acid chain: MRIILLGPPGAGKGTQSERIVERYRVPQLSTGDMLRAAVAAGTPVGLEAKSIMESGGLVPDAVVVGIVADRIEEADARDGFILDGFPRTVEQAKALDAMLAEKGIALDAVVEFVVDENALVGRIAKRAEETAARGQPVRKDDTPEVFKTRLDAYKRQTAPLSDYYAGTGLLRKIDGMKPIDEVTGDVTGLLDGFREKATS.

10 to 15 (GAGKGT) is a binding site for ATP. Positions 30–59 (STGDMLRAAVAAGTPVGLEAKSIMESGGLV) are NMP. Residues Thr31, Arg36, 57–59 (GLV), 85–88 (GFPR), and Gln92 contribute to the AMP site. The LID stretch occupies residues 126 to 142 (KRAEETAARGQPVRKDD). ATP is bound at residue Arg127. Arg139 and Arg150 together coordinate AMP. Lys178 serves as a coordination point for ATP.

Belongs to the adenylate kinase family. Monomer.

The protein resides in the cytoplasm. The enzyme catalyses AMP + ATP = 2 ADP. The protein operates within purine metabolism; AMP biosynthesis via salvage pathway; AMP from ADP: step 1/1. Its function is as follows. Catalyzes the reversible transfer of the terminal phosphate group between ATP and AMP. Plays an important role in cellular energy homeostasis and in adenine nucleotide metabolism. This Methylorubrum populi (strain ATCC BAA-705 / NCIMB 13946 / BJ001) (Methylobacterium populi) protein is Adenylate kinase.